Consider the following 77-residue polypeptide: Putative defensin-like protein 120 (77 aa).

Residues 1–26 (MTQKATILAIFMVVLVLGLETKETQG) form the signal peptide. 4 cysteine pairs are disulfide-bonded: Cys-30–Cys-75, Cys-39–Cys-60, Cys-44–Cys-69, and Cys-48–Cys-71.

This sequence belongs to the DEFL family.

It is found in the secreted. The protein is Putative defensin-like protein 120 (LCR56) of Arabidopsis thaliana (Mouse-ear cress).